We begin with the raw amino-acid sequence, 372 residues long: MNLSEIGYRRVVVKLGTSVLTSGSRQLDKAHMVELARQMAALMKAGVEVVLCTSGAIAAGREHLGYPELPDTVANKQLLAAVGQSQLILAWAQLFSIYGLHVGQLLLTRADLHDRERYLNARDSLNALLAQGIIPIINENDAVATNEIKVGDNDNLSARAALLCDADLLILLTDQRGLFDADPRSNPDAKLIKQVVNIDDSLRLLAGGAVSGLGTGGMATKLEAADIARRAGVEVIIASGHHPRVIQDAVCKESVGTHFTALENPLESRKQWILAGQATRGKLILDQGALNAVTQKGRSLLSKGIVRVEGKFERGATLHLVDSDGREFARGMSRYSAKDLHLIAGKHSDDIESLLGYDYGDAVVHRNDMVVL.

Residue Lys-14 participates in ATP binding. 3 residues coordinate substrate: Ser-54, Asp-141, and Asn-153. ATP is bound by residues 173–174 (TD) and 215–221 (TGGMATK). Positions 280 to 358 (RGKLILDQGA…DDIESLLGYD (79 aa)) constitute a PUA domain.

Belongs to the glutamate 5-kinase family.

Its subcellular location is the cytoplasm. It catalyses the reaction L-glutamate + ATP = L-glutamyl 5-phosphate + ADP. It functions in the pathway amino-acid biosynthesis; L-proline biosynthesis; L-glutamate 5-semialdehyde from L-glutamate: step 1/2. Its function is as follows. Catalyzes the transfer of a phosphate group to glutamate to form L-glutamate 5-phosphate. This Shewanella sediminis (strain HAW-EB3) protein is Glutamate 5-kinase.